The sequence spans 436 residues: UDP-N-acetylglucosamine 1-carboxyvinyltransferase 1 (436 aa).

Lysine 22–asparagine 23 contacts phosphoenolpyruvate. Position 93 (arginine 93) interacts with UDP-N-acetyl-alpha-D-glucosamine. The active-site Proton donor is cysteine 117. Cysteine 117 is subject to 2-(S-cysteinyl)pyruvic acid O-phosphothioketal. Residues arginine 122–glutamine 126, aspartate 306, and valine 328 contribute to the UDP-N-acetyl-alpha-D-glucosamine site.

This sequence belongs to the EPSP synthase family. MurA subfamily.

The protein localises to the cytoplasm. The enzyme catalyses phosphoenolpyruvate + UDP-N-acetyl-alpha-D-glucosamine = UDP-N-acetyl-3-O-(1-carboxyvinyl)-alpha-D-glucosamine + phosphate. It participates in cell wall biogenesis; peptidoglycan biosynthesis. Cell wall formation. Adds enolpyruvyl to UDP-N-acetylglucosamine. Essential for cell growth. This chain is UDP-N-acetylglucosamine 1-carboxyvinyltransferase 1, found in Bacillus subtilis (strain 168).